A 448-amino-acid polypeptide reads, in one-letter code: Trk system potassium uptake protein TrkA homolog 2 (448 aa).

The 124-residue stretch at 1–124 folds into the RCK N-terminal 1 domain; the sequence is MKAVVIGAGE…RAQVGVDIMI (124 aa). Residues 7–11, E29, 70–71, and R101 contribute to the NAD(+) site; these read GAGEV and TG. The region spanning 144–225 is the RCK C-terminal 1 domain; it reads IDAEMFAGGK…MADLENVFGN (82 aa). Residues 230–348 enclose the RCK N-terminal 2 domain; sequence RNRILLIGCG…FEMVGIDIAV (119 aa). 232-262 contacts NAD(+); sequence RILLIGCGIVGFYLAKIIDKDENADLKVIEY. The RCK C-terminal 2 domain occupies 368-448; sequence EALATIEGEK…AVRSVEKLFK (81 aa).

Functionally, part of a potassium transport system. This Methanosarcina mazei (strain ATCC BAA-159 / DSM 3647 / Goe1 / Go1 / JCM 11833 / OCM 88) (Methanosarcina frisia) protein is Trk system potassium uptake protein TrkA homolog 2 (trkA2).